We begin with the raw amino-acid sequence, 141 residues long: Hemoglobin subunit alpha (141 aa).

The Globin domain occupies 1 to 141 (VLSANDKANV…VSTVLTSKYR (141 aa)). S3 is subject to Phosphoserine. N6-succinyllysine occurs at positions 7 and 11. Position 16 is an N6-acetyllysine; alternate (K16). Position 16 is an N6-succinyllysine; alternate (K16). At Y24 the chain carries Phosphotyrosine. S35 bears the Phosphoserine mark. Position 40 is an N6-succinyllysine (K40). Position 49 is a phosphoserine (S49). Position 58 (H58) interacts with O2. Position 87 (H87) interacts with heme b. S102 carries the post-translational modification Phosphoserine. The residue at position 108 (T108) is a Phosphothreonine. Residues S124 and S131 each carry the phosphoserine modification. Residues T134 and T137 each carry the phosphothreonine modification. At S138 the chain carries Phosphoserine.

Belongs to the globin family. Heterotetramer of two alpha chains and two beta chains. Red blood cells.

In terms of biological role, involved in oxygen transport from the lung to the various peripheral tissues. Functionally, hemopressin acts as an antagonist peptide of the cannabinoid receptor CNR1. Hemopressin-binding efficiently blocks cannabinoid receptor CNR1 and subsequent signaling. The sequence is that of Hemoglobin subunit alpha (HBA) from Suncus murinus (Asian house shrew).